Here is a 456-residue protein sequence, read N- to C-terminus: Bestrophin homolog 18 (456 aa).

The next 4 membrane-spanning stretches (helical) occupy residues Trp29–Ile49, Gly83–Ile103, Ile234–Ala254, and Met267–Leu287. Residues Ala416–Lys456 form a disordered region.

The protein belongs to the anion channel-forming bestrophin (TC 1.A.46) family. Calcium-sensitive chloride channel subfamily. In terms of assembly, forms oligomers.

Its subcellular location is the cell membrane. Its function is as follows. Forms chloride channels. The chain is Bestrophin homolog 18 (best-18) from Caenorhabditis elegans.